The primary structure comprises 247 residues: Cementoblastoma-derived protein 1 (247 aa).

Polar residues predominate over residues 1–28; that stretch reads MGTSSTDSQQAGHRRCSTSNTSAENLTC. Disordered regions lie at residues 1–52 and 147–183; these read MGTS…AGQP and EENS…EKVK.

Phosphorylated. Post-translationally, N-glycosylated. In terms of tissue distribution, expressed by cementoblasts, a subpopulation of periodontal ligament cells and cells located around vessels in periodontium (at protein level).

It localises to the cytoplasm. The protein resides in the nucleus. In terms of biological role, may play a role in development of the periodontium which surrounds and supports the teeth by promoting the differentiation of multi-potent cells from the periodontal ligament into cementoblasts to form the cementum. Binds hydroxyapatite and may promote the biomineralization of the cementum. Also promotes cell proliferation. The protein is Cementoblastoma-derived protein 1 of Homo sapiens (Human).